The primary structure comprises 249 residues: BPI fold-containing family A member 2 (249 aa).

The first 18 residues, 1 to 18, serve as a signal peptide directing secretion; the sequence is MLQLWKLVLLCGVLTGTS. Asparagine 124 and asparagine 132 each carry an N-linked (GlcNAc...) asparagine glycan. Residues cysteine 174 and cysteine 217 are joined by a disulfide bond.

The protein belongs to the BPI/LBP/Plunc superfamily. Plunc family. Detected in submandibular gland. Secreted into saliva.

It is found in the secreted. Its function is as follows. Has strong antibacterial activity against P.aeruginosa. This is BPI fold-containing family A member 2 (BPIFA2) from Homo sapiens (Human).